The following is a 640-amino-acid chain: Serine/threonine-protein phosphatase with EF-hands 1 (640 aa).

The 30-residue stretch at valine 16–phenylalanine 45 folds into the IQ domain. Positions isoleucine 122–serine 445 are catalytic. 4 residues coordinate Mn(2+): aspartate 173, histidine 175, aspartate 202, and asparagine 234. The active-site Proton donor is the histidine 235. Mn(2+) contacts are provided by histidine 286 and histidine 393. EF-hand domains are found at residues alanine 473–leucine 508, arginine 556–histidine 591, and isoleucine 596–tyrosine 631. Residues aspartate 569, aspartate 571, serine 573, glutamate 580, aspartate 609, asparagine 611, aspartate 613, asparagine 615, and glutamate 620 each coordinate Ca(2+).

It belongs to the PPP phosphatase family. Mn(2+) is required as a cofactor. It depends on Mg(2+) as a cofactor.

The catalysed reaction is O-phospho-L-seryl-[protein] + H2O = L-seryl-[protein] + phosphate. It catalyses the reaction O-phospho-L-threonyl-[protein] + H2O = L-threonyl-[protein] + phosphate. Its activity is regulated as follows. Activated by calcium. May have a role in the recovery or adaptation response of photoreceptors. May have a role in development. In Rattus norvegicus (Rat), this protein is Serine/threonine-protein phosphatase with EF-hands 1 (Ppef1).